A 313-amino-acid chain; its full sequence is tRNA pseudouridine synthase B (313 aa).

D48 acts as the Nucleophile in catalysis.

It belongs to the pseudouridine synthase TruB family. Type 1 subfamily.

It carries out the reaction uridine(55) in tRNA = pseudouridine(55) in tRNA. In terms of biological role, responsible for synthesis of pseudouridine from uracil-55 in the psi GC loop of transfer RNAs. This chain is tRNA pseudouridine synthase B, found in Saccharophagus degradans (strain 2-40 / ATCC 43961 / DSM 17024).